The chain runs to 202 residues: GTP cyclohydrolase 1 (202 aa).

Residues C93, H96, and C164 each contribute to the Zn(2+) site.

This sequence belongs to the GTP cyclohydrolase I family. In terms of assembly, toroid-shaped homodecamer, composed of two pentamers of five dimers.

It catalyses the reaction GTP + H2O = 7,8-dihydroneopterin 3'-triphosphate + formate + H(+). It functions in the pathway cofactor biosynthesis; 7,8-dihydroneopterin triphosphate biosynthesis; 7,8-dihydroneopterin triphosphate from GTP: step 1/1. The polypeptide is GTP cyclohydrolase 1 (Pelagibacter ubique (strain HTCC1062)).